The primary structure comprises 505 residues: AMP phosphorylase (505 aa).

Residues G170, 196–201 (SRAITS), and T205 each bind AMP. The active-site Proton donor is the D258. AMP-binding residues include S266 and K290.

Belongs to the thymidine/pyrimidine-nucleoside phosphorylase family. Type 2 subfamily.

It carries out the reaction AMP + phosphate = alpha-D-ribose 1,5-bisphosphate + adenine. The enzyme catalyses CMP + phosphate = cytosine + alpha-D-ribose 1,5-bisphosphate. The catalysed reaction is UMP + phosphate = alpha-D-ribose 1,5-bisphosphate + uracil. Catalyzes the conversion of AMP and phosphate to adenine and ribose 1,5-bisphosphate (R15P). Exhibits phosphorylase activity toward CMP and UMP in addition to AMP. Functions in an archaeal AMP degradation pathway, together with R15P isomerase and RubisCO. This is AMP phosphorylase from Methanococcus maripaludis (strain DSM 14266 / JCM 13030 / NBRC 101832 / S2 / LL).